Consider the following 179-residue polypeptide: MGLIFAKLWSLFCNQEHKVIIVGLDNAGKTTILYQFLMNEVVHTSPTIGSNVEEIVVKNTHFLMWDIGGQESLRSSWNTYYSNTEFIILVVDSIDRERLAITKEELYRMLAHEDLRKAAVLIFANKQDMKGCMTAAEISKYLTLSSIKDHPWHIQSCCALTGEGLCQGLEWMTSRIGVR.

Gly-2 carries the N-myristoyl glycine lipid modification. GTP contacts are provided by residues 23–30, 66–70, 125–128, and Ala-159; these read GLDNAGKT, DIGGQ, and NKQD.

This sequence belongs to the small GTPase superfamily. Arf family.

In terms of biological role, binds and exchanges GTP and GDP. In Mus musculus (Mouse), this protein is ADP-ribosylation factor-like protein 5B (Arl5b).